The following is a 444-amino-acid chain: Xaa-Pro dipeptidase (444 aa).

The Mn(2+) site is built by D247, D258, H340, E385, and E424.

This sequence belongs to the peptidase M24B family. Bacterial-type prolidase subfamily. Requires Mn(2+) as cofactor.

The enzyme catalyses Xaa-L-Pro dipeptide + H2O = an L-alpha-amino acid + L-proline. Splits dipeptides with a prolyl residue in the C-terminal position. The sequence is that of Xaa-Pro dipeptidase from Photorhabdus laumondii subsp. laumondii (strain DSM 15139 / CIP 105565 / TT01) (Photorhabdus luminescens subsp. laumondii).